Here is a 427-residue protein sequence, read N- to C-terminus: Light-independent protochlorophyllide reductase subunit N (427 aa).

Positions 32, 57, and 118 each coordinate [4Fe-4S] cluster.

It belongs to the BchN/ChlN family. Protochlorophyllide reductase is composed of three subunits; BchL, BchN and BchB. Forms a heterotetramer of two BchB and two BchN subunits. Requires [4Fe-4S] cluster as cofactor.

It carries out the reaction chlorophyllide a + oxidized 2[4Fe-4S]-[ferredoxin] + 2 ADP + 2 phosphate = protochlorophyllide a + reduced 2[4Fe-4S]-[ferredoxin] + 2 ATP + 2 H2O. The protein operates within porphyrin-containing compound metabolism; bacteriochlorophyll biosynthesis (light-independent). Component of the dark-operative protochlorophyllide reductase (DPOR) that uses Mg-ATP and reduced ferredoxin to reduce ring D of protochlorophyllide (Pchlide) to form chlorophyllide a (Chlide). This reaction is light-independent. The NB-protein (BchN-BchB) is the catalytic component of the complex. In Rubrivivax gelatinosus (strain NBRC 100245 / IL144), this protein is Light-independent protochlorophyllide reductase subunit N.